A 353-amino-acid chain; its full sequence is Ig alpha-1 chain C region (353 aa).

One can recognise an Ig-like 1 domain in the interval 6 to 98; that stretch reads PKVFPLSLCS…HYTNPSQDVT (93 aa). 2 cysteine pairs are disulfide-bonded: cysteine 26–cysteine 85 and cysteine 77–cysteine 101. The tract at residues 96 to 121 is disordered; that stretch reads DVTVPCRVPSTPPTPSPSTPPTPSPP. Pro residues predominate over residues 105 to 121; the sequence is STPPTPSPSTPPTPSPP. Intrachain disulfides connect cysteine 123/cysteine 180, cysteine 147/cysteine 204, and cysteine 250/cysteine 313. Ig-like domains follow at residues 125-220 and 228-330; these read PRLS…ATLS and PEVH…KTID. Asparagine 144 is a glycosylation site (N-linked (GlcNAc...) asparagine). N-linked (GlcNAc...) asparagine glycosylation occurs at asparagine 340. Cysteine 352 provides a ligand contact to 3-hydroxy-L-kynurenine.

Monomeric or polymeric. In terms of processing, 3-Hydroxykynurenine, an oxidized tryptophan metabolite that is common in biological fluids, reacts with alpha-1-microglobulin to form heterogeneous polycyclic chromophores including hydroxanthommatin. The chromophore reacts with accessible cysteines forming non-reducible thioether cross-links with Ig alpha-1 chain C region Cys-352.

Its function is as follows. Ig alpha is the major immunoglobulin class in body secretions. It may serve both to defend against local infection and to prevent access of foreign antigens to the general immunologic system. This is Ig alpha-1 chain C region (IGHA1) from Gorilla gorilla gorilla (Western lowland gorilla).